Consider the following 460-residue polypeptide: uncharacterized protein (460 aa).

A TRAM domain is found at 9 to 67; that stretch reads NFKKNDIFEAEVLDLTHEGQGVVKIDSFPFFVDNALPGERIKMHVLKVGKSFGFGRVDE. Residues Gln292, Tyr321, Glu342, and Asp390 each coordinate S-adenosyl-L-methionine. Cys417 acts as the Nucleophile in catalysis.

It belongs to the class I-like SAM-binding methyltransferase superfamily. RNA M5U methyltransferase family.

This is an uncharacterized protein from Lactococcus lactis subsp. lactis (strain IL1403) (Streptococcus lactis).